The chain runs to 137 residues: DNA-directed RNA polymerase I subunit RPA14 (137 aa).

Residues 100 to 137 are disordered; that stretch reads PPAQDFSAAPIQVSTTEKKETSIGVSATGGKKTTFADE. The residue at position 121 (serine 121) is a Phosphoserine.

In terms of assembly, component of the RNA polymerase I (Pol I) complex consisting of 14 subunits: RPA135, RPA190, RPC40, RPA14, RPB5, RPO26, RPA43, RPB8, RPA12, RPB10, RPC19, RPC10, RPA49 and RPA34. The complex is composed of a horseshoe-shaped core containing ten subunits (RPA135, RPA190, RPB5, RPO26, RPB8, RPB10, RPC10, RPA12, RPC19 and RPC40) where RPA135 and RPA190 form the DNA-binding cleft. Outside of the core, RPA14 and RPA43 form the stalk that mediates interactions with transcription initiation factors and newly synthesized RNA. Post-translationally, the N-terminus is blocked.

It is found in the nucleus. The protein resides in the nucleolus. Functionally, DNA-dependent RNA polymerases catalyze the transcription of DNA into RNA using the four ribonucleoside triphosphates as substrates. Component of RNA polymerase I (Pol I) which synthesizes ribosomal RNA precursors. RPA14 seems to play a role in the stability of subunits RPO26 and RPA43. In vitro, the RPA14-RPA43 subcomplex binds single-stranded RNA. The sequence is that of DNA-directed RNA polymerase I subunit RPA14 (RPA14) from Saccharomyces cerevisiae (strain ATCC 204508 / S288c) (Baker's yeast).